The primary structure comprises 86 residues: Large ribosomal subunit protein uL23 (86 aa).

This sequence belongs to the universal ribosomal protein uL23 family. As to quaternary structure, part of the 50S ribosomal subunit. Contacts protein L29.

In terms of biological role, binds to 23S rRNA. One of the proteins that surrounds the polypeptide exit tunnel on the outside of the ribosome. In Thermococcus onnurineus (strain NA1), this protein is Large ribosomal subunit protein uL23.